Reading from the N-terminus, the 123-residue chain is Sperm-associated antigen 11A (123 aa).

Positions 1–25 are cleaved as a signal peptide; the sequence is MRQRLLPSVTSLLLVALLFPGSSQA. An N-linked (GlcNAc...) asparagine glycan is attached at Asn29.

Belongs to the SPAG11 family.

Its subcellular location is the secreted. Functionally, has antimicrobial activity against E.coli. Plays a role in the defense response in the male reproductive tract, contributing to sperm maturation, storage and protection. In Homo sapiens (Human), this protein is Sperm-associated antigen 11A.